We begin with the raw amino-acid sequence, 2013 residues long: Centrosomal protein 224 (2013 aa).

HEAT repeat units lie at residues 115-153 (TIEADSAEPVVEALLKGTSSTSPKILLASLAALTQALKT), 158-196 (QIPVKLILKQFSPWFENRDKGIRDQASELFIEIYRWIGK), 200-238 (PLISEALTPIQLKALQDQFEKLPTDPAVPLKYTRSEAAK), 348-386 (TSYVKPFITPILEKFKEKKTSVLQSVHTTMDSLVGKSIS), and 427-465 (TKVTKQLTKIFMEALNDTDSNIRDNASKAFAALGGIIGE). Residues 512 to 557 (PVSSSNKKPAAATGNSKSSSTTTPTGRSSNSSPLPPPPSSSDDIKN) are disordered. Residues 524–543 (TGNSKSSSTTTPTGRSSNSS) show a composition bias toward low complexity. HEAT repeat units follow at residues 724–762 (IQQLKPLLDYTKQCLESTNPDVKKSAIKLLCTIKINIGA), 816–854 (VDISVKLTPAIITNLSDANWKTRSDALDEIERIIIDANR), 857–895 (QPKLGGLIPALKNRLTDNNQKCTITTLNIIGMLSQAMGG), 899–937 (EKHARLLIPGILLLLGDSKKPVRDAVISCMNVIVQSDLG), and 977–1015 (PSEINTLAKGIISCLQDKSAEIRSLADNLLSILCTQIPL). Residues 1043–1109 (KTGQPIPPPS…QQQQRRSILQ (67 aa)) form a disordered region. The span at 1053-1106 (KTKQSTSSSSSSSSTTSQQSSTPSSPQPIRQQQQQQQQQPTQPQQQQQQQQRRS) shows a compositional bias: low complexity. 3 HEAT repeats span residues 1240-1279 (EYEASCLVPILLEKSGSATNEQIKQIFKQSIQQLEELCLP), 1281-1314 (VLFRFAIEMVTSQNWRTRVEVLNVMASIIDKNGA), and 1317-1353 (CGNLKVVIPLITQNLNDSQSKQSSLLCLNKLYSHIKD). Composition is skewed to low complexity over residues 1372-1406 (NNNNNNNNNNNNNNNNNNNNVQQQQQQQQQQQQQQ), 1695-1735 (NRIS…INSS), and 1746-1796 (SNNT…TLST). 4 disordered regions span residues 1372–1413 (NNNN…SLST), 1695–1809 (NRIS…YSGK), 1905–1949 (NQPS…IAPQ), and 1966–1995 (TLNPDQNSGSNNNNSHQNSPSTSSSNDLNS). Positions 1799 to 1809 (INKEPRDYSGK) are enriched in basic and acidic residues. The segment covering 1913–1939 (NNNNNNNNNNNNNNNNNINNNNNNNNN) has biased composition (low complexity). Over residues 1940–1949 (SGGNENIAPQ) the composition is skewed to polar residues. Positions 1967–1995 (LNPDQNSGSNNNNSHQNSPSTSSSNDLNS) are enriched in low complexity.

Belongs to the TOG/XMAP215 family. Interacts with eb1 at the microtubule tip, centrosome and kinetochore. Interacts with lis1 in the cortical attachment of microtubules.

The protein resides in the cytoplasm. Its subcellular location is the cytoskeleton. It is found in the microtubule organizing center. The protein localises to the centrosome. It localises to the chromosome. The protein resides in the centromere. Its subcellular location is the kinetochore. Involved in regulation of microtubule dynamics. Regulates the interaction of microtubules tips with the centrosome and cell cortex. The chain is Centrosomal protein 224 (mtaA) from Dictyostelium discoideum (Social amoeba).